A 240-amino-acid chain; its full sequence is Chromatin structure-remodeling complex protein BSH (240 aa).

Belongs to the SNF5 family. Interacts with SWI3A and SWI3B, but not with BRM. In terms of tissue distribution, expressed in roots, stems, leaves, flowers and siliques.

The protein resides in the nucleus. Its function is as follows. Component of a multiprotein complex equivalent of the yeast SWI/SNF complex, an ATP-dependent chromatin-remodeling complex, which is required for the positive and negative regulation of gene expression of a large number of genes. It changes chromatin structure by altering DNA-histone contacts within a nucleosome, leading eventually to a change in nucleosome position, thus facilitating or repressing binding of gene-specific transcription factors. This Arabidopsis thaliana (Mouse-ear cress) protein is Chromatin structure-remodeling complex protein BSH (BSH).